A 388-amino-acid polypeptide reads, in one-letter code: Chorismate synthase (388 aa).

NADP(+) contacts are provided by arginine 39 and arginine 45. FMN contacts are provided by residues 130–132, 251–252, alanine 296, 311–315, and arginine 337; these read RSS, NA, and KPIPT.

This sequence belongs to the chorismate synthase family. As to quaternary structure, homotetramer. FMNH2 is required as a cofactor.

The catalysed reaction is 5-O-(1-carboxyvinyl)-3-phosphoshikimate = chorismate + phosphate. It functions in the pathway metabolic intermediate biosynthesis; chorismate biosynthesis; chorismate from D-erythrose 4-phosphate and phosphoenolpyruvate: step 7/7. Functionally, catalyzes the anti-1,4-elimination of the C-3 phosphate and the C-6 proR hydrogen from 5-enolpyruvylshikimate-3-phosphate (EPSP) to yield chorismate, which is the branch point compound that serves as the starting substrate for the three terminal pathways of aromatic amino acid biosynthesis. This reaction introduces a second double bond into the aromatic ring system. The polypeptide is Chorismate synthase (Streptococcus equi subsp. zooepidemicus (strain H70)).